The sequence spans 146 residues: MRVLVQRAKRGSVRVDQKTVGDIGPGLVLLVGIHQEDTEADVRFCAEKVAHLRIFEDSSAKMNESVLDQGGSVLSISQFTLYGDCKKGRRPNFMRAAKPEKAKLLYERFNSYLRELGLVVETGEFGAMMEVELINDGPVTILVESE.

Positions 137-138 match the Gly-cisPro motif, important for rejection of L-amino acids motif; sequence GP.

This sequence belongs to the DTD family. As to quaternary structure, homodimer.

The protein localises to the cytoplasm. It catalyses the reaction glycyl-tRNA(Ala) + H2O = tRNA(Ala) + glycine + H(+). The enzyme catalyses a D-aminoacyl-tRNA + H2O = a tRNA + a D-alpha-amino acid + H(+). Functionally, an aminoacyl-tRNA editing enzyme that deacylates mischarged D-aminoacyl-tRNAs. Also deacylates mischarged glycyl-tRNA(Ala), protecting cells against glycine mischarging by AlaRS. Acts via tRNA-based rather than protein-based catalysis; rejects L-amino acids rather than detecting D-amino acids in the active site. By recycling D-aminoacyl-tRNA to D-amino acids and free tRNA molecules, this enzyme counteracts the toxicity associated with the formation of D-aminoacyl-tRNA entities in vivo and helps enforce protein L-homochirality. In Shouchella clausii (strain KSM-K16) (Alkalihalobacillus clausii), this protein is D-aminoacyl-tRNA deacylase.